The following is a 69-amino-acid chain: IEVVMGGKEGYLLDKSNGCKRSCFFGSTSWCNTECKSKSAEKGYCAWPSCYCYGFSDDSKMWDLKTNKC.

Positions Ile-1–Gly-7 are cleaved as a signal peptide. The region spanning Lys-8–Cys-69 is the LCN-type CS-alpha/beta domain. Cystine bridges form between Cys-19–Cys-69, Cys-23–Cys-45, Cys-31–Cys-50, and Cys-35–Cys-52.

Belongs to the long (4 C-C) scorpion toxin superfamily. Sodium channel inhibitor family. Beta subfamily. In terms of tissue distribution, expressed by the venom gland.

It localises to the secreted. Its function is as follows. Beta toxins bind voltage-independently at site-4 of sodium channels (Nav) and shift the voltage of activation toward more negative potentials thereby affecting sodium channel activation and promoting spontaneous and repetitive firing. The chain is Toxin Tz2 from Tityus zulianus (Venezuelan scorpion).